We begin with the raw amino-acid sequence, 810 residues long: MSKKGRNKGEKPEALIVALQAANEDLRTKLTDIQIELHQEKSKVSKLEREKTQEAKRIRELEQRKHTVLVTELKAKLHEEKMKELQAVRENLIKQHEQEMSRTVKVRDGEIQRLKSALCALRDGSSDKVRTALTIEAREEARKLFDTERLKLLQEIADLKTAKKQVDEALSNMIQADKIKAGDLRSEHQSHQEAISKIKWESERDIRRLMDEIKAKDRIIFSLEKELETQTGYVQKLQLQKEALDEQLFLVKEAECNMSSPKREIPGRAGDGSEHCSSPDLRRNQKRIAELNATIRKLEDRNTLLGDERNELLKRVRETEKQCKPLLERNKCLAKRNDELMVSLQRMEEKLKAVTKENSEMREKITSHPPLKKLKSLNDLDQANEEQETEFLKLQVIEQQNIIDELTRDREKLIRRRKHRRSSKPIKRPVLDPFIGYDEDSMDSETSSMASFRTDRTPATPDDDLDESLAAEESELRFRQLTKEYQALQRAYALLQEQTGGIIDAEREAKAQEQLQAEVLRYKAKIEDLEATLAQKGQDSHWVEDKQLFIKRNQELLEKIEKQEAENHRLQQELQDARDQNELLEFRNLELEERERRSPPFNLQIHPFSDGVSALQIYCMKEGVKDVNIPDLIKQLDILGDNGNLRNEEQVAIIQASTVLSLAEKWIQQIEGAEAALHQKMMELESDMEQFCKIKGYLEEELDYRKQALDQAYMRIQELEATLYNALQQETVIKFGELLSEKQQEELRTAVEKLRRQMLRKSREYDCQILQERMELLQQAHQRIRDLEDKTDIQKRQIKDLEEKSNRKHG.

Coiled-coil stretches lie at residues 13 to 102 (EALI…EMSR), 148 to 178 (ERLK…QADK), and 207 to 244 (RRLM…KEAL). Basic and acidic residues predominate over residues 261-274 (PKREIPGRAGDGSE). 2 disordered regions span residues 261 to 280 (PKRE…SSPD) and 437 to 465 (YDED…DDDL). Positions 280 to 419 (DLRRNQKRIA…REKLIRRRKH (140 aa)) form a coiled coil. Coiled-coil stretches lie at residues 468–597 (SLAA…RERR) and 664–808 (EKWI…SNRK).

Belongs to the JAKMIP family. As to expression, highly expressed in brain, moderately expressed in thymus, spleen and lung, and weakly expressed in kidney, liver and peripheral blood lymphocytes. Also expressed in adrenal and pituitary glands, as well as testis.

The protein resides in the golgi apparatus. This chain is Janus kinase and microtubule-interacting protein 2 (JAKMIP2), found in Homo sapiens (Human).